Consider the following 127-residue polypeptide: UPF0102 protein Gura_3756 (127 aa).

Belongs to the UPF0102 family.

The chain is UPF0102 protein Gura_3756 from Geotalea uraniireducens (strain Rf4) (Geobacter uraniireducens).